A 483-amino-acid chain; its full sequence is UDP-N-acetylmuramoyl-L-alanyl-D-glutamate--2,6-diaminopimelate ligase (483 aa).

Residue Ser-30 coordinates UDP-N-acetyl-alpha-D-muramoyl-L-alanyl-D-glutamate. Gly-109–Thr-115 contacts ATP. Residues Thr-151 to Thr-152, Ser-178, and Arg-186 each bind UDP-N-acetyl-alpha-D-muramoyl-L-alanyl-D-glutamate. Lys-218 is modified (N6-carboxylysine). Residues Arg-380, Asp-403–Arg-406, Gly-453, and Glu-457 contribute to the meso-2,6-diaminopimelate site. The short motif at Asp-403–Arg-406 is the Meso-diaminopimelate recognition motif element.

Belongs to the MurCDEF family. MurE subfamily. Mg(2+) serves as cofactor. Carboxylation is probably crucial for Mg(2+) binding and, consequently, for the gamma-phosphate positioning of ATP.

It is found in the cytoplasm. The enzyme catalyses UDP-N-acetyl-alpha-D-muramoyl-L-alanyl-D-glutamate + meso-2,6-diaminopimelate + ATP = UDP-N-acetyl-alpha-D-muramoyl-L-alanyl-gamma-D-glutamyl-meso-2,6-diaminopimelate + ADP + phosphate + H(+). The protein operates within cell wall biogenesis; peptidoglycan biosynthesis. In terms of biological role, catalyzes the addition of meso-diaminopimelic acid to the nucleotide precursor UDP-N-acetylmuramoyl-L-alanyl-D-glutamate (UMAG) in the biosynthesis of bacterial cell-wall peptidoglycan. The chain is UDP-N-acetylmuramoyl-L-alanyl-D-glutamate--2,6-diaminopimelate ligase from Chlamydia abortus (strain DSM 27085 / S26/3) (Chlamydophila abortus).